Here is a 285-residue protein sequence, read N- to C-terminus: Bifunctional protein FolD (285 aa).

Residues 165-167 and Ser-190 contribute to the NADP(+) site; that span reads GRS.

The protein belongs to the tetrahydrofolate dehydrogenase/cyclohydrolase family. In terms of assembly, homodimer.

The catalysed reaction is (6R)-5,10-methylene-5,6,7,8-tetrahydrofolate + NADP(+) = (6R)-5,10-methenyltetrahydrofolate + NADPH. The enzyme catalyses (6R)-5,10-methenyltetrahydrofolate + H2O = (6R)-10-formyltetrahydrofolate + H(+). It functions in the pathway one-carbon metabolism; tetrahydrofolate interconversion. Its function is as follows. Catalyzes the oxidation of 5,10-methylenetetrahydrofolate to 5,10-methenyltetrahydrofolate and then the hydrolysis of 5,10-methenyltetrahydrofolate to 10-formyltetrahydrofolate. The protein is Bifunctional protein FolD of Burkholderia pseudomallei (strain 1710b).